A 309-amino-acid chain; its full sequence is Homoserine kinase (309 aa).

91–101 (PIGSGLGSSAC) serves as a coordination point for ATP.

Belongs to the GHMP kinase family. Homoserine kinase subfamily.

Its subcellular location is the cytoplasm. It catalyses the reaction L-homoserine + ATP = O-phospho-L-homoserine + ADP + H(+). The protein operates within amino-acid biosynthesis; L-threonine biosynthesis; L-threonine from L-aspartate: step 4/5. In terms of biological role, catalyzes the ATP-dependent phosphorylation of L-homoserine to L-homoserine phosphate. This Citrobacter koseri (strain ATCC BAA-895 / CDC 4225-83 / SGSC4696) protein is Homoserine kinase.